Consider the following 394-residue polypeptide: Elongation factor Tu 1 (394 aa).

The tr-type G domain occupies 10–204; sequence KPHVNVGTIG…FLDSYIPEPE (195 aa). The interval 19-26 is G1; sequence GHVDHGKT. GTP is bound at residue 19 to 26; that stretch reads GHVDHGKT. T26 is a Mg(2+) binding site. The interval 60-64 is G2; that stretch reads GITIN. Positions 81–84 are G3; it reads DCPG. GTP is bound by residues 81 to 85 and 136 to 139; these read DCPGH and NKCD. Positions 136–139 are G4; it reads NKCD. The segment at 174 to 176 is G5; the sequence is SAL.

This sequence belongs to the TRAFAC class translation factor GTPase superfamily. Classic translation factor GTPase family. EF-Tu/EF-1A subfamily. In terms of assembly, monomer.

The protein localises to the cytoplasm. It carries out the reaction GTP + H2O = GDP + phosphate + H(+). Its function is as follows. GTP hydrolase that promotes the GTP-dependent binding of aminoacyl-tRNA to the A-site of ribosomes during protein biosynthesis. This chain is Elongation factor Tu 1, found in Shigella flexneri serotype 5b (strain 8401).